We begin with the raw amino-acid sequence, 142 residues long: Large ribosomal subunit protein uL11 (142 aa).

This sequence belongs to the universal ribosomal protein uL11 family. Part of the ribosomal stalk of the 50S ribosomal subunit. Interacts with L10 and the large rRNA to form the base of the stalk. L10 forms an elongated spine to which L12 dimers bind in a sequential fashion forming a multimeric L10(L12)X complex. In terms of processing, one or more lysine residues are methylated.

Forms part of the ribosomal stalk which helps the ribosome interact with GTP-bound translation factors. This Methylocella silvestris (strain DSM 15510 / CIP 108128 / LMG 27833 / NCIMB 13906 / BL2) protein is Large ribosomal subunit protein uL11.